A 357-amino-acid polypeptide reads, in one-letter code: Ribosomal RNA large subunit methyltransferase M (357 aa).

S-adenosyl-L-methionine-binding positions include Ser183, 216–219 (APGG), Asp235, Asp255, and Asp271. The active-site Proton acceptor is Lys300.

It belongs to the class I-like SAM-binding methyltransferase superfamily. RNA methyltransferase RlmE family. RlmM subfamily. Monomer.

Its subcellular location is the cytoplasm. The catalysed reaction is cytidine(2498) in 23S rRNA + S-adenosyl-L-methionine = 2'-O-methylcytidine(2498) in 23S rRNA + S-adenosyl-L-homocysteine + H(+). Its function is as follows. Catalyzes the 2'-O-methylation at nucleotide C2498 in 23S rRNA. This Pseudomonas syringae pv. tomato (strain ATCC BAA-871 / DC3000) protein is Ribosomal RNA large subunit methyltransferase M.